We begin with the raw amino-acid sequence, 109 residues long: Large ribosomal subunit protein uL22 (109 aa).

It belongs to the universal ribosomal protein uL22 family. In terms of assembly, part of the 50S ribosomal subunit.

This protein binds specifically to 23S rRNA; its binding is stimulated by other ribosomal proteins, e.g. L4, L17, and L20. It is important during the early stages of 50S assembly. It makes multiple contacts with different domains of the 23S rRNA in the assembled 50S subunit and ribosome. Functionally, the globular domain of the protein is located near the polypeptide exit tunnel on the outside of the subunit, while an extended beta-hairpin is found that lines the wall of the exit tunnel in the center of the 70S ribosome. This chain is Large ribosomal subunit protein uL22, found in Dehalococcoides mccartyi (strain ATCC BAA-2266 / KCTC 15142 / 195) (Dehalococcoides ethenogenes (strain 195)).